Consider the following 221-residue polypeptide: Probable molybdenum cofactor guanylyltransferase (221 aa).

Residues 17 to 19 (LAG), Lys29, Asp74, and Asp103 each bind GTP. Asp103 provides a ligand contact to Mg(2+).

Belongs to the MobA family. Mg(2+) serves as cofactor.

It is found in the cytoplasm. It carries out the reaction Mo-molybdopterin + GTP + H(+) = Mo-molybdopterin guanine dinucleotide + diphosphate. Its function is as follows. Transfers a GMP moiety from GTP to Mo-molybdopterin (Mo-MPT) cofactor (Moco or molybdenum cofactor) to form Mo-molybdopterin guanine dinucleotide (Mo-MGD) cofactor. The sequence is that of Probable molybdenum cofactor guanylyltransferase from Peptoclostridium acidaminophilum (Eubacterium acidaminophilum).